Here is a 574-residue protein sequence, read N- to C-terminus: 2-succinyl-5-enolpyruvyl-6-hydroxy-3-cyclohexene-1-carboxylate synthase (574 aa).

The protein belongs to the TPP enzyme family. MenD subfamily. Homodimer. Requires Mg(2+) as cofactor. Mn(2+) is required as a cofactor. The cofactor is thiamine diphosphate.

The catalysed reaction is isochorismate + 2-oxoglutarate + H(+) = 5-enolpyruvoyl-6-hydroxy-2-succinyl-cyclohex-3-ene-1-carboxylate + CO2. It functions in the pathway quinol/quinone metabolism; 1,4-dihydroxy-2-naphthoate biosynthesis; 1,4-dihydroxy-2-naphthoate from chorismate: step 2/7. The protein operates within quinol/quinone metabolism; menaquinone biosynthesis. Catalyzes the thiamine diphosphate-dependent decarboxylation of 2-oxoglutarate and the subsequent addition of the resulting succinic semialdehyde-thiamine pyrophosphate anion to isochorismate to yield 2-succinyl-5-enolpyruvyl-6-hydroxy-3-cyclohexene-1-carboxylate (SEPHCHC). This Rubrobacter xylanophilus (strain DSM 9941 / JCM 11954 / NBRC 16129 / PRD-1) protein is 2-succinyl-5-enolpyruvyl-6-hydroxy-3-cyclohexene-1-carboxylate synthase.